An 88-amino-acid chain; its full sequence is Small ribosomal subunit protein bS20 (88 aa).

The segment at 1–20 is disordered; the sequence is MANHKSAEKRARQTIKRTER.

The protein belongs to the bacterial ribosomal protein bS20 family.

Binds directly to 16S ribosomal RNA. This chain is Small ribosomal subunit protein bS20, found in Campylobacter fetus subsp. fetus (strain 82-40).